Consider the following 100-residue polypeptide: Large ribosomal subunit protein bL21 (100 aa).

It belongs to the bacterial ribosomal protein bL21 family. As to quaternary structure, part of the 50S ribosomal subunit. Contacts protein L20.

Functionally, this protein binds to 23S rRNA in the presence of protein L20. This Corynebacterium kroppenstedtii (strain DSM 44385 / JCM 11950 / CIP 105744 / CCUG 35717) protein is Large ribosomal subunit protein bL21.